Reading from the N-terminus, the 295-residue chain is 4-hydroxy-tetrahydrodipicolinate synthase (295 aa).

Threonine 45 lines the pyruvate pocket. The active-site Proton donor/acceptor is the tyrosine 131. Lysine 159 acts as the Schiff-base intermediate with substrate in catalysis. Valine 202 is a pyruvate binding site.

Belongs to the DapA family. As to quaternary structure, homotetramer; dimer of dimers.

It is found in the cytoplasm. The enzyme catalyses L-aspartate 4-semialdehyde + pyruvate = (2S,4S)-4-hydroxy-2,3,4,5-tetrahydrodipicolinate + H2O + H(+). Its pathway is amino-acid biosynthesis; L-lysine biosynthesis via DAP pathway; (S)-tetrahydrodipicolinate from L-aspartate: step 3/4. Functionally, catalyzes the condensation of (S)-aspartate-beta-semialdehyde [(S)-ASA] and pyruvate to 4-hydroxy-tetrahydrodipicolinate (HTPA). The chain is 4-hydroxy-tetrahydrodipicolinate synthase from Methanothrix thermoacetophila (strain DSM 6194 / JCM 14653 / NBRC 101360 / PT) (Methanosaeta thermophila).